The primary structure comprises 986 residues: Regulator of telomere elongation helicase 1 homolog (986 aa).

In terms of domain architecture, Helicase ATP-binding spans alanine 7–alanine 326. Serine 42–threonine 49 serves as a coordination point for ATP. The [4Fe-4S] cluster site is built by cysteine 148, cysteine 166, cysteine 175, and cysteine 211. The short motif at aspartate 254–histidine 257 is the DEAH box element. Threonine 875 carries the post-translational modification Phosphothreonine.

It belongs to the helicase family. RAD3/XPD subfamily.

It is found in the nucleus. The enzyme catalyses ATP + H2O = ADP + phosphate + H(+). Its function is as follows. A probable ATP-dependent DNA helicase implicated in DNA repair and the maintenance of genomic stability. Acts as an anti-recombinase to counteract toxic recombination and limit crossover during meiosis. Regulates meiotic recombination and crossover homeostasis by physically dissociating strand invasion events and thereby promotes noncrossover repair by meiotic synthesis dependent strand annealing (SDSA) as well as disassembly of D loop recombination intermediates. This Drosophila grimshawi (Hawaiian fruit fly) protein is Regulator of telomere elongation helicase 1 homolog.